The chain runs to 397 residues: MNRFFYTVGLIFLFSFFILYSPKTSDLSNNVDLHQQLLISLQKEEERCDLFSGYWVQDLRGSQYTNVSCSSIPESKNCFMQGRPDAGFSQWRWKPDGCELPRFDPGTFFEIVRGKTMAFIGDSVARNHVESLLCLLSSEEMPLGIYKDTEDRTRTWYFPHSNFTLMVIWTRFLVLDEERVINGSVTGVFDLHLDKMDKNWANKLPEIDYAILSDAHWFFRKNYLYEKGKNIGCIFCGEPGIKSLDIDSALQMVIKVVLNYINNCKKCRNILTVLRTFSPAHFADGAWDTGGSCNRTHPLGEKEIDLASLDWKIRSIQVEEIKRVRPVARRRKKFEVLDVTKAMLMRPDGHPNSYWGNKWMKGYNDCVHWCMPGPIDAWNDFLIALLRRHAFTDFTWS.

The Cytoplasmic portion of the chain corresponds to 1–3; it reads MNR. The chain crosses the membrane as a helical; Signal-anchor for type II membrane protein span at residues 4–24; the sequence is FFYTVGLIFLFSFFILYSPKT. Residues 25-397 are Lumenal-facing; that stretch reads SDLSNNVDLH…RHAFTDFTWS (373 aa). 4 disulfides stabilise this stretch: Cys48-Cys98, Cys69-Cys134, Cys78-Cys370, and Cys293-Cys366. An N-linked (GlcNAc...) asparagine glycan is attached at Asn66. Residues 121–123 carry the GDS motif motif; that stretch reads GDS. Catalysis depends on Ser123, which acts as the Nucleophile. 3 N-linked (GlcNAc...) asparagine glycosylation sites follow: Asn162, Asn182, and Asn294. Asp365 (proton donor) is an active-site residue. Positions 365–368 match the DXXH motif motif; the sequence is DCVH. The active-site Proton acceptor is the His368.

The protein belongs to the PC-esterase family. TBL subfamily.

It is found in the golgi apparatus membrane. Its function is as follows. Xyloglucan acetyltransferase that catalyzes the acetylation of fucosylated Gal residues on xyloglucan side chains. Predominantly catalyze 6-O-monoacetylation of Gal residues in the Fuc-Gal-Xyl trisaccharide side chains of xyloglucan oligomers. The polypeptide is Xyloglucan O-acetyltransferase 3 (Populus trichocarpa (Western balsam poplar)).